Here is a 358-residue protein sequence, read N- to C-terminus: uncharacterized protein (358 aa).

Positions 39, 61, 92, 95, 98, 106, and 157 each coordinate Zn(2+).

The protein belongs to the zinc-containing alcohol dehydrogenase family. The cofactor is Zn(2+).

This is an uncharacterized protein from Escherichia coli (strain K12).